The sequence spans 253 residues: MICOS complex subunit mic25 (253 aa).

Positions 1–89 (MGGSESTGRK…GAHKPTAAGV (89 aa)) are disordered. A lipid anchor (N-myristoyl glycine) is attached at glycine 2. Residues 28–44 (RLSDEVVNRMKDSDLPS) are compositionally biased toward basic and acidic residues. Residues 48-64 (STSAASGTASAPAAFPS) show a composition bias toward low complexity. Residues 94–178 (AEEDLYRRYE…EQLSSIEKKN (85 aa)) adopt a coiled-coil conformation. The CHCH domain maps to 206–248 (DPVCMNLQADILKCYSENKQERLNCSNLAKEYRKCVSAAQKNL). 2 short sequence motifs (cx9C motif) span residues 209–219 (CMNLQADILKC) and 230–240 (CSNLAKEYRKC). Cystine bridges form between cysteine 209-cysteine 240 and cysteine 219-cysteine 230.

It belongs to the MICOS complex subunit Mic19 family. Metazoan Mic25 subfamily. In terms of assembly, component of the mitochondrial contact site and cristae organizing system (MICOS) complex (also known as MINOS or MitOS complex).

Its subcellular location is the mitochondrion inner membrane. Its function is as follows. Component of the MICOS complex, a large protein complex of the mitochondrial inner membrane that plays crucial roles in the maintenance of crista junctions, inner membrane architecture, and formation of contact sites to the outer membrane. This Xenopus tropicalis (Western clawed frog) protein is MICOS complex subunit mic25 (chchd6).